The following is a 410-amino-acid chain: Elongation factor Tu, chloroplastic (410 aa).

The tr-type G domain occupies 10–214 (KPHINIGTIG…QVDKYIPTPQ (205 aa)). The G1 stretch occupies residues 19-26 (GHVDHGKT). Position 19-26 (19-26 (GHVDHGKT)) interacts with GTP. Thr26 is a binding site for Mg(2+). Positions 60–64 (GITIN) are G2. Residues 81 to 84 (DCPG) form a G3 region. GTP-binding positions include 81–85 (DCPGH) and 136–139 (NKED). Residues 136-139 (NKED) are G4. A G5 region spans residues 174–176 (SAL).

This sequence belongs to the TRAFAC class translation factor GTPase superfamily. Classic translation factor GTPase family. EF-Tu/EF-1A subfamily.

The protein resides in the plastid. The protein localises to the chloroplast. The catalysed reaction is GTP + H2O = GDP + phosphate + H(+). Functionally, GTP hydrolase that promotes the GTP-dependent binding of aminoacyl-tRNA to the A-site of ribosomes during protein biosynthesis. The chain is Elongation factor Tu, chloroplastic (tufA) from Mesostigma viride (Green alga).